We begin with the raw amino-acid sequence, 220 residues long: Type IV major pilin protein PilA (220 aa).

Positions 1-12 are cleaved as a propeptide — leader sequence; the sequence is MRVSRFNPRNRG. F13 bears the N-methylphenylalanine mark. A helical transmembrane segment spans residues 13–33; that stretch reads FTLIELMIVVAIIGILAAIAI.

The protein belongs to the N-Me-Phe pilin family.

It localises to the fimbrium. It is found in the membrane. Its activity is regulated as follows. The two-component PilS2/PilR2 is required for proper assembly of T4P and regulation. Functionally, major component of the type IV pili that are required for social gliding motility through cycles of extension and retraction. Extended pili are composed of thousands of copies of PilA and retract upon binding to extracellular polysaccharides and thereby pull the cell forward. This Myxococcus xanthus (strain DK1622) protein is Type IV major pilin protein PilA (pilA).